Reading from the N-terminus, the 337-residue chain is Cytochrome P450 monooxygenase dpmpJ (337 aa).

The chain crosses the membrane as a helical span at residues 4-24 (LILHHPYASLAAGILLYFFCL). Residue asparagine 158 is glycosylated (N-linked (GlcNAc...) asparagine).

Belongs to the cytochrome P450 family. The cofactor is heme.

Its subcellular location is the membrane. Its pathway is secondary metabolite biosynthesis; terpenoid biosynthesis. Cytochrome P450 monooxygenase; part of the gene cluster that mediates the biosynthesis of diterpenoid pyrones. The first step of the pathway is the synthesis of the alpha-pyrone moiety by the polyketide synthase dpmpA via condensation of one acetyl-CoA starter unit with 3 malonyl-CoA units and 2 methylations. The alpha-pyrone is then combined with geranylgeranyl pyrophosphate (GGPP) formed by the GGPP synthase dpmpD through the action of the prenyltransferase dpmpC to yield a linear alpha-pyrone diterpenoid. Subsequent steps in the diterpenoid pyrone biosynthetic pathway involve the decalin core formation, which is initiated by the epoxidation of the C10-C11 olefin by the FAD-dependent oxidoreductase dpmpE, and is followed by a cyclization cascade catalyzed by the terpene cyclase dpmpB. The short chain dehydrogenase/reductase dpmpG then oxidizes the 8S hydroxy group to a ketone and the short chain dehydrogenase/reductase dpmpH reduces the ketone to the 8R hydroxy group to yield higginsianin B. Higginsianin B is further methylated by the methyltransferase dpmpI to produce the intermediate named FDDP B. The cytochrome P450 monooxygenase dpmpJ then oxidizes the C-26 methyl to primary alcohol, producing the final diterpenoid pyrone with a C-26 primary alcohol on the gamma-pyrone moiety named FDDP C. The polypeptide is Cytochrome P450 monooxygenase dpmpJ (Macrophomina phaseolina (strain MS6) (Charcoal rot fungus)).